Consider the following 313-residue polypeptide: Porphobilinogen deaminase (313 aa).

Residue Cys242 is modified to S-(dipyrrolylmethanemethyl)cysteine.

The protein belongs to the HMBS family. In terms of assembly, monomer. Requires dipyrromethane as cofactor.

The enzyme catalyses 4 porphobilinogen + H2O = hydroxymethylbilane + 4 NH4(+). It functions in the pathway porphyrin-containing compound metabolism; protoporphyrin-IX biosynthesis; coproporphyrinogen-III from 5-aminolevulinate: step 2/4. In terms of biological role, tetrapolymerization of the monopyrrole PBG into the hydroxymethylbilane pre-uroporphyrinogen in several discrete steps. This chain is Porphobilinogen deaminase, found in Salmonella dublin (strain CT_02021853).